The following is a 143-amino-acid chain: uncharacterized protein (143 aa).

This is an uncharacterized protein from Homo sapiens (Human).